A 218-amino-acid polypeptide reads, in one-letter code: GTP cyclohydrolase 1 (218 aa).

Residues Cys-109, His-112, and Cys-180 each contribute to the Zn(2+) site.

Belongs to the GTP cyclohydrolase I family. As to quaternary structure, toroid-shaped homodecamer, composed of two pentamers of five dimers.

The catalysed reaction is GTP + H2O = 7,8-dihydroneopterin 3'-triphosphate + formate + H(+). The protein operates within cofactor biosynthesis; 7,8-dihydroneopterin triphosphate biosynthesis; 7,8-dihydroneopterin triphosphate from GTP: step 1/1. The chain is GTP cyclohydrolase 1 from Aeromonas hydrophila subsp. hydrophila (strain ATCC 7966 / DSM 30187 / BCRC 13018 / CCUG 14551 / JCM 1027 / KCTC 2358 / NCIMB 9240 / NCTC 8049).